The sequence spans 317 residues: Transcription factor EC (317 aa).

Residues 1–90 form a necessary for transcriptional transactivation region; the sequence is MTFDCRVCDQ…GLTDAPCPSI (90 aa). The bHLH domain occupies 110-163; that stretch reads QKKDNHNLIERRRRYNINYRIKELGTLIPKSNDPDMRWNKGTILKASVDYIKWL. The tract at residues 242–317 is necessary for transcriptional transactivation; that stretch reads TSPEFYEQAV…SLSSEDGDEL (76 aa).

The protein belongs to the MiT/TFE family. As to quaternary structure, homodimer. Forms heterodimers with MITF. Interacts with MITF. Forms heterodimers with TFE3. As to expression, expressed in osteoclast-like cells (at protein level). Expressed in cells of the mononuclear phagocyte lineage. Expressed in macrophages and in osteoclast-like cells.

It localises to the nucleus. Transcriptional regulator that acts as a repressor or an activator. Acts as a transcriptional transactivator on the proximal promoter region of the tartrate-resistant acid phosphatase (TRAP) E-box containing promoter. Collaborates with MITF in target gene activation. Acts as a transcriptional repressor on minimal promoter containing element F (that includes an E-box sequence). Binds to element F in an E-box sequence-specific manner. Acts as a transcriptional repressor on minimal promoter containing mu E3 enhancer sequence. Binds to mu E3 DNA sequence of the immunoglobulin heavy-chain gene enhancer. Binds DNA in a homo- or heterodimeric form. The sequence is that of Transcription factor EC (Tfec) from Mus musculus (Mouse).